The primary structure comprises 239 residues: Phosphoadenosine 5'-phosphosulfate reductase (239 aa).

Catalysis depends on Cys-235, which acts as the Nucleophile; cysteine thiosulfonate intermediate.

It belongs to the PAPS reductase family. CysH subfamily.

Its subcellular location is the cytoplasm. The enzyme catalyses [thioredoxin]-disulfide + sulfite + adenosine 3',5'-bisphosphate + 2 H(+) = [thioredoxin]-dithiol + 3'-phosphoadenylyl sulfate. Its pathway is sulfur metabolism; hydrogen sulfide biosynthesis; sulfite from sulfate: step 3/3. Catalyzes the formation of sulfite from phosphoadenosine 5'-phosphosulfate (PAPS) using thioredoxin as an electron donor. The polypeptide is Phosphoadenosine 5'-phosphosulfate reductase (Thiocapsa roseopersicina).